Here is a 348-residue protein sequence, read N- to C-terminus: Ketol-acid reductoisomerase (NADP(+)) (348 aa).

Residues 1-179 (MDVHYDADPA…GGTHAGVIET (179 aa)) enclose the KARI N-terminal Rossmann domain. NADP(+)-binding positions include 22–25 (YGSQ), arginine 45, serine 48, serine 50, and 80–83 (DQHQ). Histidine 105 is an active-site residue. Glycine 131 contributes to the NADP(+) binding site. A KARI C-terminal knotted domain is found at 180–325 (TFKDETETDL…QTLRGMMPWL (146 aa)). Mg(2+)-binding residues include aspartate 188, glutamate 192, glutamate 224, and glutamate 228. Residue serine 249 participates in substrate binding. The disordered stretch occupies residues 323–348 (PWLNGDETSADEDAPDAADTAPASSS). Residues 339–348 (AADTAPASSS) are compositionally biased toward low complexity.

The protein belongs to the ketol-acid reductoisomerase family. Mg(2+) serves as cofactor.

It catalyses the reaction (2R)-2,3-dihydroxy-3-methylbutanoate + NADP(+) = (2S)-2-acetolactate + NADPH + H(+). It carries out the reaction (2R,3R)-2,3-dihydroxy-3-methylpentanoate + NADP(+) = (S)-2-ethyl-2-hydroxy-3-oxobutanoate + NADPH + H(+). It participates in amino-acid biosynthesis; L-isoleucine biosynthesis; L-isoleucine from 2-oxobutanoate: step 2/4. It functions in the pathway amino-acid biosynthesis; L-valine biosynthesis; L-valine from pyruvate: step 2/4. Functionally, involved in the biosynthesis of branched-chain amino acids (BCAA). Catalyzes an alkyl-migration followed by a ketol-acid reduction of (S)-2-acetolactate (S2AL) to yield (R)-2,3-dihydroxy-isovalerate. In the isomerase reaction, S2AL is rearranged via a Mg-dependent methyl migration to produce 3-hydroxy-3-methyl-2-ketobutyrate (HMKB). In the reductase reaction, this 2-ketoacid undergoes a metal-dependent reduction by NADPH to yield (R)-2,3-dihydroxy-isovalerate. In Salinibacter ruber (strain DSM 13855 / M31), this protein is Ketol-acid reductoisomerase (NADP(+)).